Consider the following 253-residue polypeptide: 5'/3'-nucleotidase SurE (253 aa).

Positions 8, 9, 39, and 92 each coordinate a divalent metal cation.

Belongs to the SurE nucleotidase family. A divalent metal cation is required as a cofactor.

The protein localises to the cytoplasm. The enzyme catalyses a ribonucleoside 5'-phosphate + H2O = a ribonucleoside + phosphate. It catalyses the reaction a ribonucleoside 3'-phosphate + H2O = a ribonucleoside + phosphate. The catalysed reaction is [phosphate](n) + H2O = [phosphate](n-1) + phosphate + H(+). Functionally, nucleotidase with a broad substrate specificity as it can dephosphorylate various ribo- and deoxyribonucleoside 5'-monophosphates and ribonucleoside 3'-monophosphates with highest affinity to 3'-AMP. Also hydrolyzes polyphosphate (exopolyphosphatase activity) with the preference for short-chain-length substrates (P20-25). Might be involved in the regulation of dNTP and NTP pools, and in the turnover of 3'-mononucleotides produced by numerous intracellular RNases (T1, T2, and F) during the degradation of various RNAs. In Shigella flexneri serotype 5b (strain 8401), this protein is 5'/3'-nucleotidase SurE.